The chain runs to 249 residues: uncharacterized protein (249 aa).

7 to 14 (GKGGCGKS) provides a ligand contact to ATP.

This is an uncharacterized protein from Methanocaldococcus jannaschii (strain ATCC 43067 / DSM 2661 / JAL-1 / JCM 10045 / NBRC 100440) (Methanococcus jannaschii).